The primary structure comprises 437 residues: Elongation factor 1-alpha (437 aa).

The tr-type G domain occupies 4–229 (KPHMNLVVIG…DQLQPPAKPV (226 aa)). Residues 13–20 (GHVDHGKS) form a G1 region. A GTP-binding site is contributed by 13 to 20 (GHVDHGKS). S20 lines the Mg(2+) pocket. The segment at 69-73 (GITID) is G2. Residues 90–93 (DAPG) form a G3 region. Residues 90–94 (DAPGH) and 152–155 (NKMD) each bind GTP. The segment at 152 to 155 (NKMD) is G4. Positions 193–195 (SAW) are G5.

It belongs to the TRAFAC class translation factor GTPase superfamily. Classic translation factor GTPase family. EF-Tu/EF-1A subfamily.

It is found in the cytoplasm. It catalyses the reaction GTP + H2O = GDP + phosphate + H(+). GTP hydrolase that promotes the GTP-dependent binding of aminoacyl-tRNA to the A-site of ribosomes during protein biosynthesis. This chain is Elongation factor 1-alpha, found in Aeropyrum pernix (strain ATCC 700893 / DSM 11879 / JCM 9820 / NBRC 100138 / K1).